Reading from the N-terminus, the 152-residue chain is uncharacterized protein (152 aa).

Residues 1-5 (MWFPQ) are Cytoplasmic-facing. Residues 6–26 (IIAGMAAGGAASAMTPGKVLF) traverse the membrane as a helical segment. Residues 27 to 38 (TNALGLGCSRSR) lie on the Extracellular side of the membrane. The chain crosses the membrane as a helical span at residues 39–59 (GLFLEMFGTAVLCFTVLMTAV). The Cytoplasmic portion of the chain corresponds to 60-65 (EKRETN). The chain crosses the membrane as a helical span at residues 66–86 (FMAALPIGISLFMAHMALTGY). Residues 87–110 (TGTGVNPARSLGAAVAARYFPHYH) lie on the Extracellular side of the membrane. The NPA signature appears at 92 to 94 (NPA). Residues 111-131 (WIYWISPLLGAFLAWSVWQLL) traverse the membrane as a helical segment. Residues 132–152 (QILDYTTYVNAEKAAGQKKED) lie on the Cytoplasmic side of the membrane.

It belongs to the MIP/aquaporin (TC 1.A.8) family.

It is found in the membrane. This is an uncharacterized protein from Saccharomyces cerevisiae (strain YJM789) (Baker's yeast).